The primary structure comprises 509 residues: DNA primase large subunit (509 aa).

The segment at L253 to K270 is interdomain linker. The tract at residues G266–S509 is interacts with PRIM1. 4 residues coordinate [4Fe-4S] cluster: C287, C367, C384, and C424. The interval H300–N442 is RNA:DNA duplex-binding. The tract at residues I461–A486 is disordered. Residue T470 is modified to Phosphothreonine.

This sequence belongs to the eukaryotic-type primase large subunit family. As to quaternary structure, heterodimer of a catalytic subunit PRIM1 and a regulatory subunit PRIM2, also known as the DNA primase complex. Interacts via (C-terminus) with PRIM1. Component of the alpha DNA polymerase complex (also known as the alpha DNA polymerase-primase complex) consisting of four subunits: the catalytic subunit POLA1, the regulatory subunit POLA2, and the primase complex subunits PRIM1 and PRIM2 respectively. Within the complex, POLA1 directly interacts with PRIM2. The cofactor is [4Fe-4S] cluster.

In terms of biological role, regulatory subunit of the DNA primase complex and component of the DNA polymerase alpha complex (also known as the alpha DNA polymerase-primase complex) which play an essential role in the initiation of DNA synthesis. During the S phase of the cell cycle, the DNA polymerase alpha complex (composed of a catalytic subunit POLA1, an accessory subunit POLA2 and two primase subunits, the catalytic subunit PRIM1 and the regulatory subunit PRIM2) is recruited to DNA at the replicative forks via direct interactions with MCM10 and WDHD1. The primase subunit of the polymerase alpha complex initiates DNA synthesis by oligomerising short RNA primers on both leading and lagging strands. These primers are initially extended by the polymerase alpha catalytic subunit and subsequently transferred to polymerase delta and polymerase epsilon for processive synthesis on the lagging and leading strand, respectively. In the primase complex, both subunits are necessary for the initial di-nucleotide formation, but the extension of the primer depends only on the catalytic subunit. Binds RNA:DNA duplex and coordinates the catalytic activities of PRIM1 and POLA2 during primase-to-polymerase switch. This is DNA primase large subunit (PRIM2) from Homo sapiens (Human).